Consider the following 1042-residue polypeptide: Isoleucine--tRNA ligase (1042 aa).

A 'HIGH' region motif is present at residues 48–58; that stretch reads PFATGLPHFGH. A 'KMSKS' region motif is present at residues 594-598; it reads KMSKS. Lysine 597 provides a ligand contact to ATP.

Belongs to the class-I aminoacyl-tRNA synthetase family. IleS type 2 subfamily. Monomer. The cofactor is Zn(2+).

Its subcellular location is the cytoplasm. It carries out the reaction tRNA(Ile) + L-isoleucine + ATP = L-isoleucyl-tRNA(Ile) + AMP + diphosphate. Catalyzes the attachment of isoleucine to tRNA(Ile). As IleRS can inadvertently accommodate and process structurally similar amino acids such as valine, to avoid such errors it has two additional distinct tRNA(Ile)-dependent editing activities. One activity is designated as 'pretransfer' editing and involves the hydrolysis of activated Val-AMP. The other activity is designated 'posttransfer' editing and involves deacylation of mischarged Val-tRNA(Ile). The polypeptide is Isoleucine--tRNA ligase (Borreliella burgdorferi (strain ZS7) (Borrelia burgdorferi)).